Reading from the N-terminus, the 432-residue chain is Glycosyltransferase 6 (432 aa).

The Cytoplasmic portion of the chain corresponds to 1–18; that stretch reads MGKPGGAKTRTAVCLSDG. Residues 19 to 39 traverse the membrane as a helical; Signal-anchor for type II membrane protein segment; it reads VFFLAGAFMSLTLVWSYFSIF. Residues 40-432 lie on the Lumenal side of the membrane; it reads SPSFTSLRHD…LPFDYPNEAW (393 aa). N315 carries N-linked (GlcNAc...) asparagine glycosylation.

It belongs to the glycosyltransferase 34 family.

The protein resides in the golgi apparatus membrane. Functionally, probable glycosyltransferase that may be involved in the biosynthesis of xyloglucan. The chain is Glycosyltransferase 6 (GT6) from Arabidopsis thaliana (Mouse-ear cress).